The primary structure comprises 350 residues: Serine-threonine kinase receptor-associated protein (350 aa).

WD repeat units lie at residues 12–56, 57–96, 98–137, 141–179, 180–212, 221–262, and 263–302; these read GHTR…GTFL, GHKG…ELMT, AHKH…AEPK, GHTS…EVKS, LNFN…HSAV, EAPA…ESYK, and GHFG…TYGL. Residues serine 312, serine 335, and serine 338 each carry the phosphoserine modification.

The protein belongs to the WD repeat STRAP family. In terms of assembly, part of the core SMN complex that contains SMN1, GEMIN2/SIP1, DDX20/GEMIN3, GEMIN4, GEMIN5, GEMIN6, GEMIN7, GEMIN8 and STRAP/UNRIP. Part of the SMN-Sm complex that contains SMN1, GEMIN2/SIP1, DDX20/GEMIN3, GEMIN4, GEMIN5, GEMIN6, GEMIN7, GEMIN8, STRAP/UNRIP and the Sm proteins SNRPB, SNRPD1, SNRPD2, SNRPD3, SNRPE, SNRPF and SNRPG. Associates with the SMN complex in the cytoplasm but not in the nucleus. Interacts with GEMIN6; the interaction is direct. Interacts with GEMIN7; the interaction is direct. Interacts with CSDE1/UNR and MAWBP. Interacts with PDPK1. Interacts with TRIM48.

Its subcellular location is the cytoplasm. The protein localises to the nucleus. Functionally, the SMN complex catalyzes the assembly of small nuclear ribonucleoproteins (snRNPs), the building blocks of the spliceosome, and thereby plays an important role in the splicing of cellular pre-mRNAs. Most spliceosomal snRNPs contain a common set of Sm proteins SNRPB, SNRPD1, SNRPD2, SNRPD3, SNRPE, SNRPF and SNRPG that assemble in a heptameric protein ring on the Sm site of the small nuclear RNA to form the core snRNP (Sm core). In the cytosol, the Sm proteins SNRPD1, SNRPD2, SNRPE, SNRPF and SNRPG are trapped in an inactive 6S pICln-Sm complex by the chaperone CLNS1A that controls the assembly of the core snRNP. To assemble core snRNPs, the SMN complex accepts the trapped 5Sm proteins from CLNS1A forming an intermediate. Binding of snRNA inside 5Sm triggers eviction of the SMN complex, thereby allowing binding of SNRPD3 and SNRPB to complete assembly of the core snRNP. STRAP plays a role in the cellular distribution of the SMN complex. Negatively regulates TGF-beta signaling but positively regulates the PDPK1 kinase activity by enhancing its autophosphorylation and by significantly reducing the association of PDPK1 with 14-3-3 protein. The polypeptide is Serine-threonine kinase receptor-associated protein (STRAP) (Homo sapiens (Human)).